A 518-amino-acid polypeptide reads, in one-letter code: Myosin-binding protein 7 (518 aa).

A GTD-binding domain is found at Asn69–Lys167. Residues Val276–Met350 form a disordered region. Over residues Ser291 to Thr301 the composition is skewed to low complexity. The span at Ser310–Ser320 shows a compositional bias: polar residues. Ser385 is subject to Phosphoserine. Residues Glu399–Met431 adopt a coiled-coil conformation. The chain crosses the membrane as a helical span at residues Ile458 to Trp477.

In terms of assembly, interacts with myosin XI-I.

Its subcellular location is the endomembrane system. Membrane-anchored myosin receptors that define a distinct, plant-specific transport vesicle compartment. The sequence is that of Myosin-binding protein 7 from Arabidopsis thaliana (Mouse-ear cress).